Reading from the N-terminus, the 202-residue chain is Glycerol-3-phosphate acyltransferase (202 aa).

The next 6 helical transmembrane spans lie at 2–22 (MIIV…GFVI), 54–74 (FLVT…PLWL), 85–105 (FFTN…YPVY), 120–140 (VVLG…FIVL), 141–161 (KIFK…VIGS), and 162–182 (LIIQ…ILII).

This sequence belongs to the PlsY family. As to quaternary structure, probably interacts with PlsX.

The protein localises to the cell membrane. The enzyme catalyses an acyl phosphate + sn-glycerol 3-phosphate = a 1-acyl-sn-glycero-3-phosphate + phosphate. The protein operates within lipid metabolism; phospholipid metabolism. Its function is as follows. Catalyzes the transfer of an acyl group from acyl-phosphate (acyl-PO(4)) to glycerol-3-phosphate (G3P) to form lysophosphatidic acid (LPA). This enzyme utilizes acyl-phosphate as fatty acyl donor, but not acyl-CoA or acyl-ACP. In Staphylococcus aureus (strain Mu3 / ATCC 700698), this protein is Glycerol-3-phosphate acyltransferase.